The chain runs to 482 residues: Class E basic helix-loop-helix protein 41 (482 aa).

Lys31 participates in a covalent cross-link: Glycyl lysine isopeptide (Lys-Gly) (interchain with G-Cter in SUMO2). Positions 44–99 (TYKLPHRLIEKKRRDRINECIAQLKDLLPEHLKLTTLGHLEKAVVLELTLKHLKAL) constitute a bHLH domain. The tract at residues 67–71 (LKDLL) is necessary for interaction with RXRA and repressor activity towards RXRA. Lys121 is covalently cross-linked (Glycyl lysine isopeptide (Lys-Gly) (interchain with G-Cter in SUMO2)). One can recognise an Orange domain in the interval 131–166 (FHSGFQTCAKEVLQYLSRFESWTPREPRCVQLINHL). Residue Lys210 forms a Glycyl lysine isopeptide (Lys-Gly) (interchain with G-Cter in SUMO2) linkage. 2 disordered regions span residues 228–298 (AELA…GGAA) and 438–482 (VAPL…KEAP). Basic and acidic residues predominate over residues 246-256 (AEARPDREKGK). Residue Lys266 forms a Glycyl lysine isopeptide (Lys-Gly) (interchain with G-Cter in SUMO2) linkage. The span at 285–297 (RGGGSGGGPGGGA) shows a compositional bias: gly residues.

As to quaternary structure, homodimer. Heterodimer with BHLHE40/DEC1. Interacts with CIART and BMAL1. Interacts with RXRA. Interacts with NR0B2 and HNF1A. As to expression, highly expressed in skeletal muscle and brain, moderately expressed in pancreas and heart, weakly expressed in placenta, lung, liver and kidney.

The protein localises to the nucleus. Transcriptional repressor involved in the regulation of the circadian rhythm by negatively regulating the activity of the clock genes and clock-controlled genes. Acts as the negative limb of a novel autoregulatory feedback loop (DEC loop) which differs from the one formed by the PER and CRY transcriptional repressors (PER/CRY loop). Both these loops are interlocked as it represses the expression of PER1 and in turn is repressed by PER1/2 and CRY1/2. Represses the activity of the circadian transcriptional activator: CLOCK-BMAL1 heterodimer by competing for the binding to E-box elements (5'-CACGTG-3') found within the promoters of its target genes. Negatively regulates its own expression and the expression of DBP and BHLHE41/DEC2. Acts as a corepressor of RXR and the RXR-LXR heterodimers and represses the ligand-induced RXRA/B/G, NR1H3/LXRA, NR1H4 and VDR transactivation activity. Inhibits HNF1A-mediated transactivation of CYP1A2, CYP2E1 AND CYP3A11. The sequence is that of Class E basic helix-loop-helix protein 41 from Homo sapiens (Human).